We begin with the raw amino-acid sequence, 220 residues long: Ribose-5-phosphate isomerase A (220 aa).

Substrate-binding positions include 28–31 (TGST), 81–84 (DGAD), and 94–97 (KGGG). Glu103 functions as the Proton acceptor in the catalytic mechanism. Lys121 serves as a coordination point for substrate.

The protein belongs to the ribose 5-phosphate isomerase family. In terms of assembly, homodimer.

The catalysed reaction is aldehydo-D-ribose 5-phosphate = D-ribulose 5-phosphate. It functions in the pathway carbohydrate degradation; pentose phosphate pathway; D-ribose 5-phosphate from D-ribulose 5-phosphate (non-oxidative stage): step 1/1. Its function is as follows. Catalyzes the reversible conversion of ribose-5-phosphate to ribulose 5-phosphate. This Aromatoleum aromaticum (strain DSM 19018 / LMG 30748 / EbN1) (Azoarcus sp. (strain EbN1)) protein is Ribose-5-phosphate isomerase A.